The primary structure comprises 123 residues: Large ribosomal subunit protein uL14 (123 aa).

Belongs to the universal ribosomal protein uL14 family. As to quaternary structure, part of the 50S ribosomal subunit. Forms a cluster with proteins L3 and L19. In the 70S ribosome, L14 and L19 interact and together make contacts with the 16S rRNA in bridges B5 and B8.

Functionally, binds to 23S rRNA. Forms part of two intersubunit bridges in the 70S ribosome. This is Large ribosomal subunit protein uL14 from Serratia proteamaculans (strain 568).